A 321-amino-acid chain; its full sequence is Malate dehydrogenase (321 aa).

Residues 10 to 15 (GSGMIG) and aspartate 34 each bind NAD(+). Residues arginine 83 and arginine 89 each coordinate substrate. Residues asparagine 96 and 119 to 121 (ITN) each bind NAD(+). Substrate contacts are provided by asparagine 121 and arginine 152. Histidine 176 acts as the Proton acceptor in catalysis.

Belongs to the LDH/MDH superfamily. MDH type 3 family.

It catalyses the reaction (S)-malate + NAD(+) = oxaloacetate + NADH + H(+). In terms of biological role, catalyzes the reversible oxidation of malate to oxaloacetate. The polypeptide is Malate dehydrogenase (Sinorhizobium fredii (strain NBRC 101917 / NGR234)).